The sequence spans 139 residues: Translation initiation factor 2 subunit beta (139 aa).

This sequence belongs to the eIF-2-beta/eIF-5 family. In terms of assembly, heterotrimer composed of an alpha, a beta and a gamma chain.

Its function is as follows. eIF-2 functions in the early steps of protein synthesis by forming a ternary complex with GTP and initiator tRNA. The chain is Translation initiation factor 2 subunit beta from Methanococcus aeolicus (strain ATCC BAA-1280 / DSM 17508 / OCM 812 / Nankai-3).